Consider the following 596-residue polypeptide: Fructan 1-exohydrolase w3 (596 aa).

Positions 1 to 20 (MAQAWAFLLPVLVLGSYVTS) are cleaved as a signal peptide. The active site involves D75. 3 N-linked (GlcNAc...) asparagine glycosylation sites follow: N168, N236, and N248. A disulfide bridge connects residues C446 and C492.

The protein belongs to the glycosyl hydrolase 32 family. Expressed in the stem, particularly the penultimate internode. Little expression is detected in roots and in the peduncle part of the stem.

The catalysed reaction is Hydrolysis of terminal, non-reducing (2-&gt;1)-linked beta-D-fructofuranose residues in fructans.. With respect to regulation, inhibited by sucrose. In terms of biological role, hydrolyzes inulin-type beta-(2,1)-fructans and beta-(2,1)-linkages in branched fructans. Has low activity against beta-(2,6)-linked fructans. May play a role as a beta-(2,1)-trimmer during graminan biosynthesis. The polypeptide is Fructan 1-exohydrolase w3 (Triticum aestivum (Wheat)).